The sequence spans 909 residues: E3 ubiquitin-protein ligase HACE1 (909 aa).

The segment at 1–21 is N-terminal helix important for homodimerization; the sequence is MERAMEQLNRLTRSLRRARTV. ANK repeat units lie at residues 23–55, 64–93, 97–126, 130–159, 163–192, 196–226, and 228–253; these read LPED…NSKF, VKRS…NPNY, SGCT…DVNI, EGLT…DVDV, MGQT…DINR, SGAT…YLPD, and NGVT…QYHP. A disordered region spans residues 398-433; it reads QDQDAASIPPFEPPGPGSYENLSTGTRESKPDALAG. The HECT domain maps to 574–909; it reads NCAKLKQGIA…HCGSYGYTMA (336 aa). The active-site Glycyl thioester intermediate is Cys-876.

Homodimer. The homodimer is autoinhibited and stabilized by its N-terminal helix. Interacts with RAB1 (RAB1A, RAB1B or RAB1C), RAB4 (RAB4A or RAB4B) and RAB11 (RAB11A or RAB11B); in a GTP-dependent manner. Interacts with the 26S proteasomal complex through the 20S core proteasomal subunit. Interacts with RARB. Post-translationally, autoubiquitinated. Expressed in multiple tissues including heart, brain and kidney.

The protein localises to the golgi apparatus. The protein resides in the golgi stack membrane. Its subcellular location is the cytoplasm. It is found in the endoplasmic reticulum. It catalyses the reaction S-ubiquitinyl-[E2 ubiquitin-conjugating enzyme]-L-cysteine + [acceptor protein]-L-lysine = [E2 ubiquitin-conjugating enzyme]-L-cysteine + N(6)-ubiquitinyl-[acceptor protein]-L-lysine.. It functions in the pathway protein modification; protein ubiquitination. With respect to regulation, sterically autoinhibited in its dimeric state. Its function is as follows. E3 ubiquitin-protein ligase involved in Golgi membrane fusion and regulation of small GTPases. Acts as a regulator of Golgi membrane dynamics during the cell cycle: recruited to Golgi membrane by Rab proteins and regulates postmitotic Golgi membrane fusion. Acts by mediating ubiquitination during mitotic Golgi disassembly, ubiquitination serving as a signal for Golgi reassembly later, after cell division. Specifically binds GTP-bound RAC1, mediating ubiquitination and subsequent degradation of active RAC1, thereby playing a role in host defense against pathogens. May also act as a transcription regulator via its interaction with RARB. The chain is E3 ubiquitin-protein ligase HACE1 (HACE1) from Homo sapiens (Human).